A 266-amino-acid polypeptide reads, in one-letter code: Thymidylate synthase (266 aa).

Arg-24 provides a ligand contact to dUMP. His-54 lines the (6R)-5,10-methylene-5,6,7,8-tetrahydrofolate pocket. A dUMP-binding site is contributed by 129 to 130 (RR). Cys-149 serves as the catalytic Nucleophile. DUMP-binding positions include 169–172 (RSAD), Asn-180, and 210–212 (HIY). Asp-172 is a (6R)-5,10-methylene-5,6,7,8-tetrahydrofolate binding site. Ala-265 serves as a coordination point for (6R)-5,10-methylene-5,6,7,8-tetrahydrofolate.

It belongs to the thymidylate synthase family. Bacterial-type ThyA subfamily. Homodimer.

Its subcellular location is the cytoplasm. It catalyses the reaction dUMP + (6R)-5,10-methylene-5,6,7,8-tetrahydrofolate = 7,8-dihydrofolate + dTMP. The protein operates within pyrimidine metabolism; dTTP biosynthesis. Catalyzes the reductive methylation of 2'-deoxyuridine-5'-monophosphate (dUMP) to 2'-deoxythymidine-5'-monophosphate (dTMP) while utilizing 5,10-methylenetetrahydrofolate (mTHF) as the methyl donor and reductant in the reaction, yielding dihydrofolate (DHF) as a by-product. This enzymatic reaction provides an intracellular de novo source of dTMP, an essential precursor for DNA biosynthesis. In Mycobacterium bovis (strain ATCC BAA-935 / AF2122/97), this protein is Thymidylate synthase.